Here is a 435-residue protein sequence, read N- to C-terminus: Serine/threonine-protein kinase 40 (435 aa).

The Protein kinase domain maps to 35-332 (FILGPRLGNS…DVLEALSAII (298 aa)). Residues 41 to 49 (LGNSPVPSI) and Lys-66 contribute to the ATP site. Asp-197 functions as the Proton acceptor in the catalytic mechanism.

It belongs to the protein kinase superfamily. CAMK Ser/Thr protein kinase family.

The protein localises to the nucleus. It is found in the cytoplasm. It carries out the reaction L-seryl-[protein] + ATP = O-phospho-L-seryl-[protein] + ADP + H(+). It catalyses the reaction L-threonyl-[protein] + ATP = O-phospho-L-threonyl-[protein] + ADP + H(+). May be a negative regulator of NF-kappa-B and p53-mediated gene transcription. The polypeptide is Serine/threonine-protein kinase 40 (Stk40) (Rattus norvegicus (Rat)).